A 181-amino-acid chain; its full sequence is GTPase RhebL1 (181 aa).

GTP is bound by residues 30–36 (LEDYDPT), Gly61, 117–120 (NKAD), and 147–148 (SA). Positions 33–41 (YDPTVENTY) match the Effector region motif. Thr36 contributes to the Mg(2+) binding site. The residue at position 178 (Cys178) is a Cysteine methyl ester. Cys178 is lipidated: S-farnesyl cysteine. Positions 179 to 181 (HLM) are cleaved as a propeptide — removed in mature form.

It belongs to the small GTPase superfamily. Rheb family. Interacts with MTOR.

It localises to the endomembrane system. The protein localises to the cytoplasm. It catalyses the reaction GTP + H2O = GDP + phosphate + H(+). Binds GTP and exhibits intrinsic GTPase activity. May activate NF-kappa-B-mediated gene transcription. Promotes signal transduction through MTOR, activates RPS6KB1, and is a downstream target of the small GTPase-activating proteins TSC1 and TSC2. The chain is GTPase RhebL1 (RHEBL1) from Bos taurus (Bovine).